Reading from the N-terminus, the 879-residue chain is Band 4.1-like protein 1 (879 aa).

The tract at residues 1–88 (MTTETGPDSE…TPSKAQKSPQ (88 aa)) is disordered. Residues 17–35 (ETPQQPEAAAAVTTPVTPA) show a composition bias toward low complexity. Position 30 is a phosphothreonine (Thr-30). The segment covering 38–50 (SHPETNSNEKHLT) has biased composition (basic and acidic residues). Ser-75 carries the post-translational modification Phosphoserine. Residues 76 to 87 (ERTTPSKAQKSP) show a composition bias toward polar residues. Thr-79 bears the Phosphothreonine mark. Residues 97-378 (AICRVTLLDA…EHHTFFRLVS (282 aa)) form the FERM domain. The residue at position 343 (Tyr-343) is a Phosphotyrosine. Ser-378, Ser-430, Ser-437, Ser-461, and Ser-466 each carry phosphoserine. The segment at 381–482 (PPPKGFLVMG…VRTPTKIKEL (102 aa)) is hydrophilic. Residues 428 to 501 (SRSLDGAEFS…HKQEFLDKPE (74 aa)) form a disordered region. A compositionally biased stretch (basic and acidic residues) spans 444-501 (ENHDAGPEGDKREDDAESGGRRSEAEEGEVRTPTKIKELKPEQETTPRHKQEFLDKPE). The residue at position 475 (Thr-475) is a Phosphothreonine. Residues 483-541 (KPEQETTPRHKQEFLDKPEDVLLKHQASINELKRTLKEPNSKLIHRDRDWDRERRLPSS) are spectrin--actin-binding. Ser-510 bears the Phosphoserine mark. Residues 514 to 538 (LKRTLKEPNSKLIHRDRDWDRERRL) are compositionally biased toward basic and acidic residues. The tract at residues 514-594 (LKRTLKEPNS…QDQERDAVFL (81 aa)) is disordered. Phosphoserine is present on residues Ser-540, Ser-541, Ser-544, and Ser-546. Thr-550 is subject to Phosphothreonine. The span at 550–577 (TPEKASERAGLREGSEEKVKPPRPRAPE) shows a compositional bias: basic and acidic residues. Phosphoserine occurs at positions 564, 578, 639, 648, 650, 665, 666, 671, 677, and 684. The segment at 657-696 (FAQDLKGPSSQEDESGGLEDSPDRGACSTPEMPQFESVKA) is disordered. At Thr-685 the chain carries Phosphothreonine. Phosphoserine occurs at positions 721, 782, and 868. Residues 743–879 (PCITTETIST…EERDKKPQES (137 aa)) are C-terminal (CTD).

In terms of assembly, interacts with AGAP2. Highest expression in brain, also present in kidney, olfactory epithelium, retina, sensory ganglia, gastrointestinal tract (only enteric neurons) and lung.

Its subcellular location is the cytoplasm. It is found in the cytoskeleton. In terms of biological role, may function to confer stability and plasticity to neuronal membrane via multiple interactions, including the spectrin-actin-based cytoskeleton, integral membrane channels and membrane-associated guanylate kinases. This is Band 4.1-like protein 1 from Mus musculus (Mouse).